Reading from the N-terminus, the 177-residue chain is MSCKFVLQLLGFWLLLSQPCRARVTKEWLDEVIHVCGREYVRAILDICAATVGLEAPPLRRRRMTEEAVSSFIKEDAEPFDTMPNLSEKPKTALPEGHPSLPEQQQYVPVSSDSVGSLDDFKKSFHATQGEAEDSSLPELKSLYLDTLSRKKRYTSIYMSHQCCFRGCSRRSLTAAC.

Positions 1–22 are cleaved as a signal peptide; that stretch reads MSCKFVLQLLGFWLLLSQPCRA. 3 disulfide bridges follow: Cys-36–Cys-164, Cys-48–Cys-177, and Cys-163–Cys-168. Positions 64-149 are cleaved as a propeptide — connecting peptide; the sequence is MTEEAVSSFI…LKSLYLDTLS (86 aa). The tract at residues 80-114 is disordered; sequence FDTMPNLSEKPKTALPEGHPSLPEQQQYVPVSSDS. The segment covering 102 to 114 has biased composition (polar residues); it reads PEQQQYVPVSSDS.

It belongs to the insulin family. As to quaternary structure, heterodimer of a B chain and an A chain linked by two disulfide bonds.

It is found in the secreted. Functionally, relaxin is an ovarian hormone that acts with estrogen to produce dilatation of the birth canal in many mammals. It bears mature young, and allows separation of the pelvic bones. The protein is Prorelaxin (RLN) of Mesocricetus auratus (Golden hamster).